Here is a 431-residue protein sequence, read N- to C-terminus: Transposase for insertion sequence element IS232 (431 aa).

Residues 20 to 79 form the HTH IS21-type domain; sequence PNFKKLMGNLKMKINKSQLARELNVDRRTIDKYLNGFTPKGTKNKTSKIDTYYEVIAALL. A DNA-binding region (H-T-H motif) is located at residues 35 to 54; it reads KSQLARELNVDRRTIDKYLN. The 176-residue stretch at 140-315 folds into the Integrase catalytic domain; that stretch reads YETPPGEQAQ…IPVFALKQEK (176 aa).

Belongs to the transposase IS21/IS408/IS1162 family.

Involved in the transposition of the insertion sequence. The protein is Transposase for insertion sequence element IS232 of Bacillus thuringiensis subsp. berliner.